We begin with the raw amino-acid sequence, 303 residues long: Probable aspartoacylase (303 aa).

Zn(2+)-binding residues include histidine 13 and glutamate 16. Substrate contacts are provided by residues arginine 55 and 62 to 63 (NR). Residue histidine 104 participates in Zn(2+) binding. Residues glutamate 162 and tyrosine 273 each coordinate substrate.

It belongs to the AspA/AstE family. Aspartoacylase subfamily. The cofactor is Zn(2+).

It catalyses the reaction an N-acyl-L-aspartate + H2O = a carboxylate + L-aspartate. In Parasynechococcus marenigrum (strain WH8102), this protein is Probable aspartoacylase.